The primary structure comprises 373 residues: Putative glutamate--cysteine ligase 2 (373 aa).

The protein belongs to the glutamate--cysteine ligase type 2 family. YbdK subfamily. As to quaternary structure, homodimer.

It catalyses the reaction L-cysteine + L-glutamate + ATP = gamma-L-glutamyl-L-cysteine + ADP + phosphate + H(+). ATP-dependent carboxylate-amine ligase which exhibits weak glutamate--cysteine ligase activity. The protein is Putative glutamate--cysteine ligase 2 of Enterobacter sp. (strain 638).